Consider the following 2273-residue polypeptide: Acetyl-CoA carboxylase, mitochondrial (2273 aa).

The transit peptide at 1-104 (KGKTITHGQS…RGNIHKHTRL (104 aa)) directs the protein to the mitochondrion. Residues 134–635 (VISKILIANN…STGWLDDLIL (502 aa)) form the Biotin carboxylation domain. The ATP-grasp domain maps to 292–484 (KTNFVSVPDD…LPATQLQIAM (193 aa)). Residue 332 to 337 (GGGGKG) participates in ATP binding. Arg-459 is an active-site residue. The 75-residue stretch at 763 to 837 (LEAELNPTQV…EAGDVIAKLT (75 aa)) folds into the Biotinyl-binding domain. Lys-804 bears the N6-biotinyllysine mark. The CoA carboxyltransferase N-terminal domain maps to 1532–1867 (PYSVKDWLQP…KRDMSPPLLE (336 aa)). Residues 1532-2187 (PYSVKDWLQP…EGQVIKRLQK (656 aa)) are carboxyltransferase. 3 residues coordinate CoA: Arg-1776, Lys-2080, and Arg-2082. The CoA carboxyltransferase C-terminal domain maps to 1871–2187 (RWDRDVDFKP…EGQVIKRLQK (317 aa)).

Requires biotin as cofactor.

Its subcellular location is the mitochondrion. The enzyme catalyses hydrogencarbonate + acetyl-CoA + ATP = malonyl-CoA + ADP + phosphate + H(+). It carries out the reaction N(6)-biotinyl-L-lysyl-[protein] + hydrogencarbonate + ATP = N(6)-carboxybiotinyl-L-lysyl-[protein] + ADP + phosphate + H(+). It participates in lipid metabolism; malonyl-CoA biosynthesis; malonyl-CoA from acetyl-CoA: step 1/1. In terms of biological role, catalyzes the rate-limiting reaction in the mitochondrial fatty acid synthesis (FAS) type II pathway. Responsible for the production of the mitochondrial malonyl-CoA, used for the biosynthesis of the cofactor lipoic acid. This protein carries three functions: biotin carboxyl carrier protein, biotin carboxylase, and carboxyltransferase. In Saccharomyces cerevisiae (strain YJM789) (Baker's yeast), this protein is Acetyl-CoA carboxylase, mitochondrial (HFA1).